A 210-amino-acid chain; its full sequence is Large ribosomal subunit protein uL4 (210 aa).

Residues 57–78 (VSGGGAKPWKQKGTGRARAGSN) are disordered.

This sequence belongs to the universal ribosomal protein uL4 family. Part of the 50S ribosomal subunit.

One of the primary rRNA binding proteins, this protein initially binds near the 5'-end of the 23S rRNA. It is important during the early stages of 50S assembly. It makes multiple contacts with different domains of the 23S rRNA in the assembled 50S subunit and ribosome. In terms of biological role, forms part of the polypeptide exit tunnel. The sequence is that of Large ribosomal subunit protein uL4 from Desulfovibrio desulfuricans (strain ATCC 27774 / DSM 6949 / MB).